We begin with the raw amino-acid sequence, 188 residues long: Phosphoribosylglycinamide formyltransferase (188 aa).

Position 12–14 (12–14) interacts with N(1)-(5-phospho-beta-D-ribosyl)glycinamide; that stretch reads GSN. (6R)-10-formyltetrahydrofolate-binding positions include Lys-66, 91-94, and Asn-108; that span reads MRLI. The active-site Proton donor is the His-110.

The protein belongs to the GART family.

The enzyme catalyses N(1)-(5-phospho-beta-D-ribosyl)glycinamide + (6R)-10-formyltetrahydrofolate = N(2)-formyl-N(1)-(5-phospho-beta-D-ribosyl)glycinamide + (6S)-5,6,7,8-tetrahydrofolate + H(+). The protein operates within purine metabolism; IMP biosynthesis via de novo pathway; N(2)-formyl-N(1)-(5-phospho-D-ribosyl)glycinamide from N(1)-(5-phospho-D-ribosyl)glycinamide (10-formyl THF route): step 1/1. Its function is as follows. Catalyzes the transfer of a formyl group from 10-formyltetrahydrofolate to 5-phospho-ribosyl-glycinamide (GAR), producing 5-phospho-ribosyl-N-formylglycinamide (FGAR) and tetrahydrofolate. The chain is Phosphoribosylglycinamide formyltransferase from Staphylococcus aureus (strain MRSA252).